The chain runs to 227 residues: MDIERINDHTMKFFITYIDIEDRGFNREEIWYDRERSEELFWEMMDEARDHDDFFIDGPLWIQVQAVDKGIEVLVTKAELSKDGQKLELPIGVDKIIDIPLDEGIESLFQQELVEEVEEQTGTNFNEDGTFGFLIKFNDFEDVISLSHRLIFEDIKDELYSFEDRYYVYVEFDEVLHDEEEIDRILSIILEYGEESTLTIHRVSEYGKQIVKEHALETIRNNFPAKT.

The protein belongs to the MecA family. Homodimer.

In terms of biological role, enables the recognition and targeting of unfolded and aggregated proteins to the ClpC protease or to other proteins involved in proteolysis. Acts negatively in the development of competence by binding ComK and recruiting it to the ClpCP protease. When overexpressed, inhibits sporulation. Also involved in Spx degradation by ClpC. This Bacillus cereus (strain ATCC 14579 / DSM 31 / CCUG 7414 / JCM 2152 / NBRC 15305 / NCIMB 9373 / NCTC 2599 / NRRL B-3711) protein is Adapter protein MecA 1 (mecA1).